A 1035-amino-acid chain; its full sequence is Condensin complex subunit 3 (1035 aa).

HEAT repeat units follow at residues 113–150 and 153–191; these read RFVDQFIRHVLRGVESPDKNVRFRVLQLLAVIMDNIGE and ESLFNLLILSLNKRIYDREPTVRIQAVFCLTKFQDEEQT. Phosphoserine is present on serine 198. One copy of the HEAT 3 repeat lies at 201-239; the sequence is EENFEATRTLVASIQNDPSAEVRRAAMLNLINDNNTRPY. A disordered region spans residues 500 to 536; that stretch reads EEKIKSKKINRRNETSVDEEDENGTHNDEVNEDEEDD. HEAT repeat units lie at residues 597-635 and 827-864; these read ILIASLMDTLITPAVRNTAPNIRELGVKNLGLCCLLDVK and VQLTFLIDVLKIYAQIEKKEIKKMIITNINAIFLSSEQ. The segment covering 909–919 has biased composition (basic and acidic residues); that stretch reads ERSETQTKDEN. Disordered stretches follow at residues 909–934 and 959–995; these read ERSETQTKDENNTANDQYSSILGNSF and TTVNISAVDNTTEQSNSRKRTRSEAEQIDTSKNLENM. Composition is skewed to polar residues over residues 920–934 and 959–973; these read NTANDQYSSILGNSF and TTVNISAVDNTTEQS. Phosphoserine is present on serine 933. Serine 981 carries the phosphoserine modification. Positions 986 to 995 are enriched in polar residues; that stretch reads IDTSKNLENM. Residue serine 1008 is modified to Phosphoserine. Residues 1012–1035 form a disordered region; the sequence is PDEKSDAMSIDEEDKDSESFSEVC.

This sequence belongs to the CND3 (condensin subunit 3) family. In terms of assembly, component of the condensin complex, which contains the SMC2 and SMC4 heterodimer, and three non SMC subunits that probably regulate the complex: BRN1, YCS4 and YCG1/YCS5.

The protein resides in the nucleus. Its subcellular location is the cytoplasm. It is found in the chromosome. Its function is as follows. Regulatory subunit of the condensin complex, a complex required for conversion of interphase chromatin into mitotic-like condense chromosomes. The condensin complex probably introduces positive supercoils into relaxed DNA in the presence of type I topoisomerases and converts nicked DNA into positive knotted forms in the presence of type II topoisomerases. The condensin complex probably also plays a role during interphase. The protein is Condensin complex subunit 3 (YCG1) of Saccharomyces cerevisiae (strain ATCC 204508 / S288c) (Baker's yeast).